The following is a 112-amino-acid chain: Integration host factor subunit alpha (112 aa).

It belongs to the bacterial histone-like protein family. In terms of assembly, heterodimer of an alpha and a beta chain.

Its function is as follows. This protein is one of the two subunits of integration host factor, a specific DNA-binding protein that functions in genetic recombination as well as in transcriptional and translational control. This Rhizobium johnstonii (strain DSM 114642 / LMG 32736 / 3841) (Rhizobium leguminosarum bv. viciae) protein is Integration host factor subunit alpha.